The primary structure comprises 420 residues: Proteasome-activating nucleotidase (420 aa).

The interval 1–25 is disordered; that stretch reads MRSHLVKPGSVYDGIEPGELGETTE. Residues 22–79 are a coiled coil; sequence ETTESVQDRVRQLESRNSFLEEQCSQIESEKRYLENQKIKYEREIRKLQSELDRMKTS. Residues 203–208 and His342 each bind ATP; that span reads GTGKTL. The docks into pockets in the proteasome alpha-ring to cause gate opening stretch occupies residues 418-420; it reads MFV.

Belongs to the AAA ATPase family. As to quaternary structure, homohexamer. The hexameric complex has a two-ring architecture resembling a top hat that caps the 20S proteasome core at one or both ends. Upon ATP-binding, the C-terminus of PAN interacts with the alpha-rings of the proteasome core by binding to the intersubunit pockets.

The protein resides in the cytoplasm. ATPase which is responsible for recognizing, binding, unfolding and translocation of substrate proteins into the archaeal 20S proteasome core particle. Is essential for opening the gate of the 20S proteasome via an interaction with its C-terminus, thereby allowing substrate entry and access to the site of proteolysis. Thus, the C-termini of the proteasomal ATPase function like a 'key in a lock' to induce gate opening and therefore regulate proteolysis. Unfolding activity requires energy from ATP hydrolysis, whereas ATP binding alone promotes ATPase-20S proteasome association which triggers gate opening, and supports translocation of unfolded substrates. This chain is Proteasome-activating nucleotidase, found in Methanosarcina mazei (strain ATCC BAA-159 / DSM 3647 / Goe1 / Go1 / JCM 11833 / OCM 88) (Methanosarcina frisia).